Reading from the N-terminus, the 244-residue chain is ATP synthase subunit a (244 aa).

6 helical membrane passes run 17 to 37 (LTNI…AILT), 75 to 95 (FLAL…LGLP), 112 to 132 (DPAI…YYGV), 164 to 184 (LTLG…LGLL), 196 to 216 (FFLG…WQAF), and 217 to 237 (SLFI…VYMS).

The protein belongs to the ATPase A chain family. F-type ATPases have 2 components, CF(1) - the catalytic core - and CF(0) - the membrane proton channel. CF(1) has five subunits: alpha(3), beta(3), gamma(1), delta(1), epsilon(1). CF(0) has three main subunits: a(1), b(2) and c(9-12). The alpha and beta chains form an alternating ring which encloses part of the gamma chain. CF(1) is attached to CF(0) by a central stalk formed by the gamma and epsilon chains, while a peripheral stalk is formed by the delta and b chains.

The protein localises to the cell membrane. Its function is as follows. Key component of the proton channel; it plays a direct role in the translocation of protons across the membrane. This chain is ATP synthase subunit a, found in Bacillus velezensis (strain DSM 23117 / BGSC 10A6 / LMG 26770 / FZB42) (Bacillus amyloliquefaciens subsp. plantarum).